Consider the following 157-residue polypeptide: SsrA-binding protein (157 aa).

Positions 132–157 (VHDKRQAQKDKDWAREKDRLFKKAYK) are disordered. Over residues 135–157 (KRQAQKDKDWAREKDRLFKKAYK) the composition is skewed to basic and acidic residues.

The protein belongs to the SmpB family.

It localises to the cytoplasm. Required for rescue of stalled ribosomes mediated by trans-translation. Binds to transfer-messenger RNA (tmRNA), required for stable association of tmRNA with ribosomes. tmRNA and SmpB together mimic tRNA shape, replacing the anticodon stem-loop with SmpB. tmRNA is encoded by the ssrA gene; the 2 termini fold to resemble tRNA(Ala) and it encodes a 'tag peptide', a short internal open reading frame. During trans-translation Ala-aminoacylated tmRNA acts like a tRNA, entering the A-site of stalled ribosomes, displacing the stalled mRNA. The ribosome then switches to translate the ORF on the tmRNA; the nascent peptide is terminated with the 'tag peptide' encoded by the tmRNA and targeted for degradation. The ribosome is freed to recommence translation, which seems to be the essential function of trans-translation. This is SsrA-binding protein from Francisella tularensis subsp. novicida (strain U112).